A 513-amino-acid polypeptide reads, in one-letter code: ATP synthase subunit alpha (513 aa).

169–176 (GDRQTGKT) contacts ATP.

It belongs to the ATPase alpha/beta chains family. As to quaternary structure, F-type ATPases have 2 components, CF(1) - the catalytic core - and CF(0) - the membrane proton channel. CF(1) has five subunits: alpha(3), beta(3), gamma(1), delta(1), epsilon(1). CF(0) has three main subunits: a(1), b(2) and c(9-12). The alpha and beta chains form an alternating ring which encloses part of the gamma chain. CF(1) is attached to CF(0) by a central stalk formed by the gamma and epsilon chains, while a peripheral stalk is formed by the delta and b chains.

Its subcellular location is the cell inner membrane. It catalyses the reaction ATP + H2O + 4 H(+)(in) = ADP + phosphate + 5 H(+)(out). In terms of biological role, produces ATP from ADP in the presence of a proton gradient across the membrane. The alpha chain is a regulatory subunit. This Yersinia enterocolitica serotype O:8 / biotype 1B (strain NCTC 13174 / 8081) protein is ATP synthase subunit alpha.